Reading from the N-terminus, the 1244-residue chain is Mitotic chromosome and X-chromosome-associated protein mix-1 (1244 aa).

Residue 32–39 (GYNGSGKS) participates in ATP binding. The stretch at 247–355 (VKKSAKEIED…AKRKEHEDSK (109 aa)) forms a coiled coil. A compositionally biased stretch (basic and acidic residues) spans 337-355 (LSKDREVLDAKRKEHEDSK). The interval 337–369 (LSKDREVLDAKRKEHEDSKAANSKDIQSQSDDE) is disordered. Positions 356 to 365 (AANSKDIQSQ) are enriched in polar residues. Positions 415 to 472 (ITAAKKRGERLHNQIKHLEGEKATLSARSKSDIGSADNYQKEVDEINKQLQLLGFNID) form a coiled coil. An SMC hinge domain is found at 526–654 (DVFGYVAHLI…DSLDVAREIA (129 aa)). Coiled coils occupy residues 701–946 (PQIE…RKEA) and 975–1037 (YTVS…IATL). Over residues 919–932 (AKTKSKREEKEKEL) the composition is skewed to basic and acidic residues. Residues 919-943 (AKTKSKREEKEKELTSLQQSEASNR) are disordered. Over residues 1216-1232 (DAAAKKGAQKNDKEPPK) the composition is skewed to basic and acidic residues. Positions 1216 to 1244 (DAAAKKGAQKNDKEPPKKKPIVVDDDDFE) are disordered.

Belongs to the SMC family. SMC2 subfamily. As to quaternary structure, component of the condensin I complex, which contains the mix-1/SMC2 and smc-4/SMC4 heterodimer, and three non SMC subunits that probably regulate the complex: dpy-26, capg-1 and dpy-28. Within the complex, interacts with smc-4, dpy-26, dpy-28 and capg-1. Interaction with smc-4 is required for mitotic chromosome localization. Component of the condensin II complex, which contains the mix-1/SMC2 and smc-4/SMC4 heterodimer, and three non SMC subunits, capg-2, kle-2 and hcp-6 that probably regulate the complex. Within the complex, interacts with smc-4, capg-2, kle-2 and hcp-6. Also a component of the condensin-like dosage compensation complex, which contains the mix-1/SMC2 and dpy-27/SMC4 heterodimer, and three non SMC subunits that probably regulate the complex: dpy-26, capg-1 and dpy-28. Within the complex, interacts with dpy-27, dpy-26, capg-1 and dpy-28. Requires capg-1 for hermaphrodite X chromosome localization. Interacts with smcl-1. In terms of tissue distribution, expressed in embryos and in adult somatic and germline tissues (at protein level).

It localises to the nucleus. The protein resides in the chromosome. Essential protein required for both chromosome condensation and segregation and X-chromosome dosage compensation depending on its binding partners. Central component of the condensin I complex, a complex required for conversion of interphase chromatin into mitotic-like condense chromosomes. The condensin complex introduces positive supercoils into relaxed DNA in the presence of type I topoisomerases. Converts nicked DNA into positive knotted forms in the presence of type II topoisomerases. Central component of the condensin II complex, a complex that seems to play a role in prophase chromosome condensation and organization. Both the condensin complex I and II play a role in meiotic and mitotic chromosome segregation. Plays a role in robust cytokinesis upon the presence of chromatin obstructions. Also a member of the condensin I-like dosage compensation complex that associates specifically with hermaphrodite X chromosomes to reduce their gene transcription during interphase. The chain is Mitotic chromosome and X-chromosome-associated protein mix-1 (mix-1) from Caenorhabditis elegans.